Here is a 368-residue protein sequence, read N- to C-terminus: D-alanine--D-alanine ligase (368 aa).

An ATP-grasp domain is found at 151-358 (KKLLAAEGLP…YRTLISTLVD (208 aa)). Residue 179 to 234 (KAELGLPVFVKPARGGSSIGITRVSNWDGLDGAIAHARLHDPKVIVEGAIIGREVE) coordinates ATP. Mg(2+) is bound by residues aspartate 313, glutamate 325, and asparagine 327.

The protein belongs to the D-alanine--D-alanine ligase family. The cofactor is Mg(2+). Mn(2+) serves as cofactor.

It is found in the cytoplasm. It carries out the reaction 2 D-alanine + ATP = D-alanyl-D-alanine + ADP + phosphate + H(+). Its pathway is cell wall biogenesis; peptidoglycan biosynthesis. In terms of biological role, cell wall formation. The sequence is that of D-alanine--D-alanine ligase from Rhodococcus erythropolis (strain PR4 / NBRC 100887).